The following is a 176-amino-acid chain: MFEATTILAYKGENHSVIGGDGQVTFGNCVLKGNATKIRMLYNGKILSGFAGSTADAFTLFEMFERILENRKGDLVKSVIDFSKEWRKDKYLRRLEAMMIVMDRERLFILSGTGDVVEPEDGKIAAIGSGGNYALSAARALDKFADLPESELVRESLLIAGELCIYTNTNIKLLEL.

Residue Thr5 is part of the active site. Residues Gly161, Cys164, and Thr167 each contribute to the Na(+) site.

The protein belongs to the peptidase T1B family. HslV subfamily. A double ring-shaped homohexamer of HslV is capped on each side by a ring-shaped HslU homohexamer. The assembly of the HslU/HslV complex is dependent on binding of ATP.

It is found in the cytoplasm. The enzyme catalyses ATP-dependent cleavage of peptide bonds with broad specificity.. With respect to regulation, allosterically activated by HslU binding. In terms of biological role, protease subunit of a proteasome-like degradation complex believed to be a general protein degrading machinery. The protein is ATP-dependent protease subunit HslV of Wolinella succinogenes (strain ATCC 29543 / DSM 1740 / CCUG 13145 / JCM 31913 / LMG 7466 / NCTC 11488 / FDC 602W) (Vibrio succinogenes).